The chain runs to 141 residues: Actin-depolymerizing factor 9 (141 aa).

The residue at position 8 (S8) is a Phosphoserine. The region spanning 8 to 141 is the ADF-H domain; it reads SGMWMTDDCK…GFDKIQDRAK (134 aa).

It belongs to the actin-binding proteins ADF family.

The protein localises to the cytoplasm. The protein resides in the cytoskeleton. In terms of biological role, does not display typical F-actin depolymerizing activity. Exhibits a high ability to stabilize and cross-link actin filaments. Functions as an actin bundling protein with the highest efficiency under acidic conditions. May play a role in the modulation of levels of histone H3 lysine 4 trimethylation and H3 lysine 9 and 14 acetylation at the FLC locus. This Arabidopsis thaliana (Mouse-ear cress) protein is Actin-depolymerizing factor 9 (ADF9).